Consider the following 432-residue polypeptide: Adenylosuccinate synthetase (432 aa).

GTP is bound by residues 13-19 and 41-43; these read GDEGKGK and GHT. Aspartate 14 (proton acceptor) is an active-site residue. The Mg(2+) site is built by aspartate 14 and glycine 41. Residues 14–17, 39–42, threonine 130, arginine 144, glutamine 225, threonine 240, and arginine 304 each bind IMP; these read DEGK and NAGH. The Proton donor role is filled by histidine 42. 300–306 contributes to the substrate binding site; the sequence is AVTGRPR. GTP contacts are provided by residues arginine 306, 332–334, and 415–417; these read KLD and STG.

It belongs to the adenylosuccinate synthetase family. Homodimer. Requires Mg(2+) as cofactor.

It localises to the cytoplasm. It carries out the reaction IMP + L-aspartate + GTP = N(6)-(1,2-dicarboxyethyl)-AMP + GDP + phosphate + 2 H(+). It participates in purine metabolism; AMP biosynthesis via de novo pathway; AMP from IMP: step 1/2. Its function is as follows. Plays an important role in the de novo pathway of purine nucleotide biosynthesis. Catalyzes the first committed step in the biosynthesis of AMP from IMP. The sequence is that of Adenylosuccinate synthetase from Haemophilus ducreyi (strain 35000HP / ATCC 700724).